The primary structure comprises 157 residues: 6,7-dimethyl-8-ribityllumazine synthase (157 aa).

Residues phenylalanine 22, alanine 57–glutamate 59, and threonine 81–isoleucine 83 each bind 5-amino-6-(D-ribitylamino)uracil. A (2S)-2-hydroxy-3-oxobutyl phosphate-binding site is contributed by glycine 86 to threonine 87. Residue histidine 89 is the Proton donor of the active site. Phenylalanine 114 contributes to the 5-amino-6-(D-ribitylamino)uracil binding site. Residue arginine 128 coordinates (2S)-2-hydroxy-3-oxobutyl phosphate.

Belongs to the DMRL synthase family. In terms of assembly, forms an icosahedral capsid composed of 60 subunits, arranged as a dodecamer of pentamers.

It catalyses the reaction (2S)-2-hydroxy-3-oxobutyl phosphate + 5-amino-6-(D-ribitylamino)uracil = 6,7-dimethyl-8-(1-D-ribityl)lumazine + phosphate + 2 H2O + H(+). It participates in cofactor biosynthesis; riboflavin biosynthesis; riboflavin from 2-hydroxy-3-oxobutyl phosphate and 5-amino-6-(D-ribitylamino)uracil: step 1/2. Catalyzes the formation of 6,7-dimethyl-8-ribityllumazine by condensation of 5-amino-6-(D-ribitylamino)uracil with 3,4-dihydroxy-2-butanone 4-phosphate. This is the penultimate step in the biosynthesis of riboflavin. In Haemophilus influenzae (strain 86-028NP), this protein is 6,7-dimethyl-8-ribityllumazine synthase.